A 250-amino-acid polypeptide reads, in one-letter code: Hydroxyacylglutathione hydrolase (250 aa).

Zn(2+) contacts are provided by His-52, His-54, Asp-56, His-57, His-107, Asp-128, and His-166.

It belongs to the metallo-beta-lactamase superfamily. Glyoxalase II family. Monomer. It depends on Zn(2+) as a cofactor.

It catalyses the reaction an S-(2-hydroxyacyl)glutathione + H2O = a 2-hydroxy carboxylate + glutathione + H(+). It functions in the pathway secondary metabolite metabolism; methylglyoxal degradation; (R)-lactate from methylglyoxal: step 2/2. In terms of biological role, thiolesterase that catalyzes the hydrolysis of S-D-lactoyl-glutathione to form glutathione and D-lactic acid. The chain is Hydroxyacylglutathione hydrolase from Neisseria meningitidis serogroup A / serotype 4A (strain DSM 15465 / Z2491).